Reading from the N-terminus, the 97-residue chain is Large ribosomal subunit protein eL21 (97 aa).

Belongs to the eukaryotic ribosomal protein eL21 family.

In Archaeoglobus fulgidus (strain ATCC 49558 / DSM 4304 / JCM 9628 / NBRC 100126 / VC-16), this protein is Large ribosomal subunit protein eL21 (rpl21e).